Reading from the N-terminus, the 115-residue chain is Succinate dehydrogenase assembly factor 3, mitochondrial (115 aa).

Belongs to the complex I LYR family. SDHAF3 subfamily. As to quaternary structure, interacts with sdh2 within an sdh1-sdh2 subcomplex.

It is found in the mitochondrion matrix. Its function is as follows. Plays an essential role in the assembly of succinate dehydrogenase (SDH), an enzyme complex (also referred to as respiratory complex II) that is a component of both the tricarboxylic acid (TCA) cycle and the mitochondrial electron transport chain, and which couples the oxidation of succinate to fumarate with the reduction of ubiquinone (coenzyme Q) to ubiquinol. Promotes maturation of the iron-sulfur protein subunit sdh2 of the SDH catalytic dimer, protecting it from the deleterious effects of oxidants. May act together with SDHAF1. The sequence is that of Succinate dehydrogenase assembly factor 3, mitochondrial from Schizosaccharomyces pombe (strain 972 / ATCC 24843) (Fission yeast).